A 247-amino-acid chain; its full sequence is uncharacterized protein (247 aa).

Helical transmembrane passes span 11-31 and 39-59; these read LIAPPLNTFVLLIIAAIIYCV and FIAIISFTWLYIMSAPFTGLL.

Its subcellular location is the cell membrane. This is an uncharacterized protein from Haemophilus influenzae (strain ATCC 51907 / DSM 11121 / KW20 / Rd).